The chain runs to 285 residues: NAD kinase (285 aa).

Residue D64 is the Proton acceptor of the active site. NAD(+) contacts are provided by residues 64 to 65 (DG), 140 to 141 (ND), R151, R168, D170, and 181 to 186 (TGYNLS).

Belongs to the NAD kinase family. It depends on a divalent metal cation as a cofactor.

Its subcellular location is the cytoplasm. The enzyme catalyses NAD(+) + ATP = ADP + NADP(+) + H(+). In terms of biological role, involved in the regulation of the intracellular balance of NAD and NADP, and is a key enzyme in the biosynthesis of NADP. Catalyzes specifically the phosphorylation on 2'-hydroxyl of the adenosine moiety of NAD to yield NADP. The chain is NAD kinase from Lachnoclostridium phytofermentans (strain ATCC 700394 / DSM 18823 / ISDg) (Clostridium phytofermentans).